The sequence spans 202 residues: ATP-dependent Clp protease proteolytic subunit 1 (202 aa).

Catalysis depends on S101, which acts as the Nucleophile. Residue H126 is part of the active site.

This sequence belongs to the peptidase S14 family. Fourteen ClpP subunits assemble into 2 heptameric rings which stack back to back to give a disk-like structure with a central cavity, resembling the structure of eukaryotic proteasomes.

The protein localises to the cytoplasm. It carries out the reaction Hydrolysis of proteins to small peptides in the presence of ATP and magnesium. alpha-casein is the usual test substrate. In the absence of ATP, only oligopeptides shorter than five residues are hydrolyzed (such as succinyl-Leu-Tyr-|-NHMec, and Leu-Tyr-Leu-|-Tyr-Trp, in which cleavage of the -Tyr-|-Leu- and -Tyr-|-Trp bonds also occurs).. Cleaves peptides in various proteins in a process that requires ATP hydrolysis. Has a chymotrypsin-like activity. Plays a major role in the degradation of misfolded proteins. This chain is ATP-dependent Clp protease proteolytic subunit 1, found in Rhizobium etli (strain ATCC 51251 / DSM 11541 / JCM 21823 / NBRC 15573 / CFN 42).